Consider the following 107-residue polypeptide: Phosphoribosyl-ATP pyrophosphatase (107 aa).

It belongs to the PRA-PH family.

It is found in the cytoplasm. It catalyses the reaction 1-(5-phospho-beta-D-ribosyl)-ATP + H2O = 1-(5-phospho-beta-D-ribosyl)-5'-AMP + diphosphate + H(+). It functions in the pathway amino-acid biosynthesis; L-histidine biosynthesis; L-histidine from 5-phospho-alpha-D-ribose 1-diphosphate: step 2/9. This chain is Phosphoribosyl-ATP pyrophosphatase, found in Bacillus cereus (strain ZK / E33L).